A 224-amino-acid polypeptide reads, in one-letter code: BOS complex subunit TMEM147 (224 aa).

The chain crosses the membrane as a helical span at residues 1–21; it reads MTLFHFGNCFALAYFPYFITY. Residues 22–34 are Cytoplasmic-facing; the sequence is KCSGLSEYNAFWK. Residues 35–58 form a helical membrane-spanning segment; sequence CVQAGVTYLFVQLCKMLFLATFFP. Topologically, residues 59 to 66 are lumenal; the sequence is TWEGGIYD. A helical membrane pass occupies residues 67-88; it reads FIGEFMKASVDVADLIGLNLVM. Over 89–98 the chain is Cytoplasmic; the sequence is SRNAGKGEYK. The helical transmembrane segment at 99 to 124 threads the bilayer; the sequence is IMVAALGWATAELIMSRCIPLWVGAR. Residues 125–129 are Lumenal-facing; that stretch reads GIEFD. The chain crosses the membrane as a helical span at residues 130-155; the sequence is WKYIQMSIDSNISLVHYIVASAQVWM. Residues 156–164 lie on the Cytoplasmic side of the membrane; the sequence is ITRYDLYHT. Residues 165 to 187 form a helical membrane-spanning segment; sequence FRPAVLLLMFLSVYKAFVMETFV. Residues 188–194 lie on the Lumenal side of the membrane; it reads HLCSLGS. Residues 195 to 216 form a helical membrane-spanning segment; sequence WTALLARAVVTGLLALSTLALY. The Cytoplasmic segment spans residues 217–224; that stretch reads VAVVNVHS.

The protein belongs to the TMEM147 family. As to quaternary structure, component of the back of Sec61 (BOS) complex, composed of NCLN/Nicalin, NOMO1 and TMEM147. The BOS complex is part of the multi-pass translocon (MPT) complex, composed of three subcomplexes, the GEL complex (composed of RAB5IF/OPTI and TMCO1), the BOS complex (composed of NCLN/Nicalin, NOMO1 and TMEM147) and the PAT complex (composed of WDR83OS/Asterix and CCDC47). The MPT complex associates with the SEC61 complex. Interacts with CHRM3, CHRM1 and AVPR2. Interacts with LBR; promoting LBR localization to the nucleus inner membrane. Interacts with DHCR7.

It is found in the endoplasmic reticulum membrane. The protein resides in the nucleus membrane. Its subcellular location is the cell membrane. Component of the multi-pass translocon (MPT) complex that mediates insertion of multi-pass membrane proteins into the lipid bilayer of membranes. The MPT complex takes over after the SEC61 complex: following membrane insertion of the first few transmembrane segments of proteins by the SEC61 complex, the MPT complex occludes the lateral gate of the SEC61 complex to promote insertion of subsequent transmembrane regions. Also acts as a negative regulator of CHRM3 function, most likely by interfering with its trafficking to the cell membrane. Negatively regulates CHRM3-mediated calcium mobilization and activation of RPS6KA1/p90RSK activity. Regulates LBR localization to the nucleus inner membrane. This is BOS complex subunit TMEM147 from Canis lupus familiaris (Dog).